A 210-amino-acid polypeptide reads, in one-letter code: uncharacterized protein (210 aa).

Helical transmembrane passes span 5–25 (LAYI…TMLV), 50–70 (FWTV…VILF), 75–95 (YLGA…KSMF), and 155–175 (IILA…LVYI).

Belongs to the Rht family.

The protein resides in the cell membrane. This is an uncharacterized protein from Bacillus subtilis (strain 168).